The primary structure comprises 154 residues: Ubiquitin-conjugating enzyme E2 L5 (154 aa).

One can recognise a UBC core domain in the interval 2–149; that stretch reads AASRRLMKEL…AEEFTKKYGE (148 aa). Catalysis depends on Cys86, which acts as the Glycyl thioester intermediate.

It belongs to the ubiquitin-conjugating enzyme family.

It carries out the reaction S-ubiquitinyl-[E1 ubiquitin-activating enzyme]-L-cysteine + [E2 ubiquitin-conjugating enzyme]-L-cysteine = [E1 ubiquitin-activating enzyme]-L-cysteine + S-ubiquitinyl-[E2 ubiquitin-conjugating enzyme]-L-cysteine.. It functions in the pathway protein modification; protein ubiquitination. Catalyzes the covalent attachment of ubiquitin to other proteins. In Homo sapiens (Human), this protein is Ubiquitin-conjugating enzyme E2 L5.